A 203-amino-acid polypeptide reads, in one-letter code: Outer-membrane lipoprotein LolB (203 aa).

An N-terminal signal peptide occupies residues 1 to 21 (MRLSASLFHIALVTVLLVLAG). Cys-22 carries N-palmitoyl cysteine lipidation. Cys-22 is lipidated: S-diacylglycerol cysteine.

This sequence belongs to the LolB family. As to quaternary structure, monomer.

Its subcellular location is the cell outer membrane. Plays a critical role in the incorporation of lipoproteins in the outer membrane after they are released by the LolA protein. The protein is Outer-membrane lipoprotein LolB of Shewanella frigidimarina (strain NCIMB 400).